The chain runs to 344 residues: uncharacterized protein (344 aa).

The disordered stretch occupies residues 95 to 344 (TINPEDANED…TPAKKNSKGR (250 aa)). Residues 103–123 (EDAKVKNSLKLEKEEGSDEKS) show a composition bias toward basic and acidic residues. Acidic residues predominate over residues 135-155 (SDDESDNSNDSEESEAEDSDQ). A compositionally biased stretch (low complexity) spans 191-200 (SAKNAKASKP). Over residues 244-259 (SEDEDSGSDNSEEESE) the composition is skewed to acidic residues. Basic residues predominate over residues 265-276 (ASSKKPPSKSSK). Over residues 281–314 (EDEDEDSGQSESEHSEEESNSDEDSGQSEEESEE) the composition is skewed to acidic residues. Residues 331-344 (TAKKTPAKKNSKGR) show a composition bias toward basic residues.

This is an uncharacterized protein from Acanthamoeba polyphaga (Amoeba).